Consider the following 295-residue polypeptide: 5'-adenylylsulfate reductase-like 6 (295 aa).

A signal peptide spans 1 to 22; sequence MEKKLTLLLLVVVVLFVNLTNA. The 139-residue stretch at 23–161 folds into the Thioredoxin domain; that stretch reads TVRVQICPRE…LVAFYTDVTG (139 aa). Asparagine 136 carries an N-linked (GlcNAc...) asparagine glycan. A helical membrane pass occupies residues 208-228; the sequence is ATVFVLLRLLHLISPTMVVFV.

Its subcellular location is the membrane. The polypeptide is 5'-adenylylsulfate reductase-like 6 (APRL6) (Arabidopsis thaliana (Mouse-ear cress)).